A 1034-amino-acid chain; its full sequence is Beta-galactosidase (1034 aa).

The Proton donor role is filled by glutamate 481. Glutamate 547 functions as the Nucleophile in the catalytic mechanism.

This sequence belongs to the glycosyl hydrolase 2 family.

The enzyme catalyses Hydrolysis of terminal non-reducing beta-D-galactose residues in beta-D-galactosides.. The polypeptide is Beta-galactosidase (bgaM) (Priestia megaterium (strain DSM 319 / IMG 1521) (Bacillus megaterium)).